Here is a 706-residue protein sequence, read N- to C-terminus: Choline transporter-like protein 2 (706 aa).

The Cytoplasmic portion of the chain corresponds to 1 to 33 (MGGERQHYYGKHGTPQKYDPTFKGPIYHRGCTD). Thr14 bears the Phosphothreonine mark. A helical transmembrane segment spans residues 34–54 (VICCVFLLLAIVGYVAVGIIA). The Extracellular segment spans residues 55 to 232 (WTHGDPRKVI…RIFEDYTVSW (178 aa)). Asn187 and Asn200 each carry an N-linked (GlcNAc...) asparagine glycan. A helical membrane pass occupies residues 233–253 (YWIIIGLVIAMVLSLLFIILL). At 254–256 (RFL) the chain is on the cytoplasmic side. The chain crosses the membrane as a helical span at residues 257 to 277 (AGIMVWVMIVMVILVLGYGIF). Residues 278–315 (HCYMEYSRLRGEAGSDISLVDLGFQTDLRVYLHLRQTW) are Extracellular-facing. The helical transmembrane segment at 316 to 336 (MAFMIILSILEVIIILLLIFL) threads the bilayer. Residues 337–364 (RKRILIAIALIKEASRAVGYVMCSMLYP) are Cytoplasmic-facing. The chain crosses the membrane as a helical span at residues 365-385 (LVTFLLLCLCIAYWASTAIFL). Over 386–440 (STSNEAVYKIFSDTDCQAVGKTCNPENFSSSSEFHLCPGAHCQFAFYGGESTYHR) the chain is Extracellular. A helical membrane pass occupies residues 441 to 461 (ALLGLQIFNAFMFFWLANFVL). At 462-504 (ALGQVTLAGAFASYYWALKKPDDLPAFPLFSAFGRALRYHTGS) the chain is on the cytoplasmic side. Residues 505-525 (LAFGSLLLAIVQIIRVMLEYL) form a helical membrane-spanning segment. Residues 526-563 (DQRLKAAENKFAKFLMTCLKCCFWCLEKFIKFLNRNAY) lie on the Extracellular side of the membrane. A helical transmembrane segment spans residues 564-584 (IMIAIYGTNFCTSARNAFFLL). Residues 585–599 (MRNIIRVAVLDKVTD) are Cytoplasmic-facing. A helical membrane pass occupies residues 600–620 (FLFLLGKLLIVGSVGILAFFF). Over 621 to 638 (FTHRIRIVQDTAPPLNYY) the chain is Extracellular. Residues 639 to 659 (WVPILTVIVGSYLIAHGFFSV) form a helical membrane-spanning segment. At 660–706 (YGMCVDTLFLCFLEDLERNDGSMERPYFMSPTLKRLLNKTNRKPAES) the chain is on the cytoplasmic side.

It belongs to the CTL (choline transporter-like) family. In terms of assembly, interacts with COCH. N-glycosylated.

The protein resides in the cell membrane. It localises to the mitochondrion outer membrane. The catalysed reaction is choline(out) + n H(+)(in) = choline(in) + n H(+)(out). It carries out the reaction ethanolamine(out) + n H(+)(in) = ethanolamine(in) + n H(+)(out). Its function is as follows. Choline/H+ antiporter, mainly in mitochodria. Also acts as a low-affinity ethanolamine/H+ antiporter, regulating the supply of extracellular ethanolamine (Etn) for the CDP-Etn pathway, redistribute intracellular Etn and balance the CDP-Cho and CDP-Etn arms of the Kennedy pathway. This chain is Choline transporter-like protein 2 (SLC44A2), found in Sus scrofa (Pig).